Reading from the N-terminus, the 954-residue chain is Bifunctional endo-1,4-beta-xylanase XylA (954 aa).

The segment at residues 1–27 (MKLSKIKKVLSGTVSALMIASAAPVVA) is a signal peptide (or 28, or 29). The 208-residue stretch at 29 to 236 (AADQQTRGNV…SNGSANVKSV (208 aa)) folds into the GH11 domain. Glu122 serves as the catalytic Nucleophile. Glu223 (proton donor) is an active-site residue. The span at 233–243 (VKSVSVTQGGS) shows a compositional bias: polar residues. The tract at residues 233-628 (VKSVSVTQGG…NNNNSAGSSD (396 aa)) is disordered. The segment covering 246 to 622 (NGGQQQNNDW…WNQGQQNNNN (377 aa)) has biased composition (low complexity). The GH10 domain occupies 624–952 (AGSSDSLKGA…KPAYDRVMAL (329 aa)). Glu774 serves as the catalytic Proton donor. Glu884 acts as the Nucleophile in catalysis.

The protein in the N-terminal section; belongs to the glycosyl hydrolase 11 (cellulase G) family. In the C-terminal section; belongs to the glycosyl hydrolase 10 (cellulase F) family.

The catalysed reaction is Endohydrolysis of (1-&gt;4)-beta-D-xylosidic linkages in xylans.. It functions in the pathway glycan degradation; xylan degradation. Functionally, xylanase domain releases more xylo-oligosaccharides and GH10 domain more xylose. In Ruminococcus flavefaciens, this protein is Bifunctional endo-1,4-beta-xylanase XylA (xynA).